A 1334-amino-acid polypeptide reads, in one-letter code: SCAR-like protein 2 (1334 aa).

Residues 197-207 (KTGNFQREKKS) are compositionally biased toward basic and acidic residues. 10 disordered regions span residues 197–281 (KTGN…SSFS), 294–331 (DTKP…GTSA), 481–516 (PDSS…ADAP), 568–602 (PNQS…SSYT), 643–668 (DKPT…TVES), 791–832 (STSH…KNII), 931–956 (FEKK…YSEK), 1000–1026 (FQLL…GRSY), 1248–1268 (SGQQ…DTKN), and 1280–1304 (RSKT…TANS). Residues 241–256 (VQLTSRHFATPSTDGR) show a composition bias toward polar residues. Residues 310–319 (SNNNLHKLSN) are compositionally biased toward low complexity. Over residues 320–330 (TPLHTRLNGTS) the composition is skewed to polar residues. Over residues 574–595 (DSKEIPDSKAEDAPIDSPEKLE) the composition is skewed to basic and acidic residues. Residues 791–823 (STSHSSETNQSTVRTPDTVIGQTEGSTGCSTSF) show a composition bias toward polar residues. Residues 945 to 956 (SSLFSSSHYSEK) are compositionally biased toward low complexity. The segment covering 1248 to 1260 (SGQQKLNGHEKSK) has biased composition (basic and acidic residues). Residues 1271-1289 (EREELLQQIRSKTFNLRRT) form the WH2 domain. A compositionally biased stretch (low complexity) spans 1289–1304 (TNASKTNTSSPTTANS).

It belongs to the SCAR/WAVE family.

The protein resides in the cytoplasm. It localises to the cytoskeleton. In terms of biological role, involved in regulation of actin and microtubule organization. Part of a WAVE complex that activates the Arp2/3 complex. In Oryza sativa subsp. japonica (Rice), this protein is SCAR-like protein 2.